Here is an 859-residue protein sequence, read N- to C-terminus: Leucine--tRNA ligase (859 aa).

The 'HIGH' region signature appears at 42–52 (PYPSGRLHMGH). Positions 618-622 (KMSKS) match the 'KMSKS' region motif. An ATP-binding site is contributed by K621.

Belongs to the class-I aminoacyl-tRNA synthetase family.

Its subcellular location is the cytoplasm. It carries out the reaction tRNA(Leu) + L-leucine + ATP = L-leucyl-tRNA(Leu) + AMP + diphosphate. The protein is Leucine--tRNA ligase of Shewanella woodyi (strain ATCC 51908 / MS32).